Reading from the N-terminus, the 616-residue chain is Dihydroxy-acid dehydratase (616 aa).

D81 is a binding site for Mg(2+). C122 is a [2Fe-2S] cluster binding site. Positions 123 and 124 each coordinate Mg(2+). K124 carries the N6-carboxylysine modification. A [2Fe-2S] cluster-binding site is contributed by C195. E491 lines the Mg(2+) pocket. S517 serves as the catalytic Proton acceptor.

It belongs to the IlvD/Edd family. As to quaternary structure, homodimer. [2Fe-2S] cluster is required as a cofactor. Mg(2+) serves as cofactor.

It catalyses the reaction (2R)-2,3-dihydroxy-3-methylbutanoate = 3-methyl-2-oxobutanoate + H2O. The catalysed reaction is (2R,3R)-2,3-dihydroxy-3-methylpentanoate = (S)-3-methyl-2-oxopentanoate + H2O. It functions in the pathway amino-acid biosynthesis; L-isoleucine biosynthesis; L-isoleucine from 2-oxobutanoate: step 3/4. Its pathway is amino-acid biosynthesis; L-valine biosynthesis; L-valine from pyruvate: step 3/4. Functions in the biosynthesis of branched-chain amino acids. Catalyzes the dehydration of (2R,3R)-2,3-dihydroxy-3-methylpentanoate (2,3-dihydroxy-3-methylvalerate) into 2-oxo-3-methylpentanoate (2-oxo-3-methylvalerate) and of (2R)-2,3-dihydroxy-3-methylbutanoate (2,3-dihydroxyisovalerate) into 2-oxo-3-methylbutanoate (2-oxoisovalerate), the penultimate precursor to L-isoleucine and L-valine, respectively. This chain is Dihydroxy-acid dehydratase, found in Serratia proteamaculans (strain 568).